Consider the following 89-residue polypeptide: Small ribosomal subunit protein eS25A (89 aa).

Belongs to the eukaryotic ribosomal protein eS25 family. Component of the small ribosomal subunit (SSU). Mature yeast ribosomes consist of a small (40S) and a large (60S) subunit. The 40S small subunit contains 1 molecule of ribosomal RNA (18S rRNA) and at least 33 different proteins. The large 60S subunit contains 3 rRNA molecules (25S, 5.8S and 5S rRNA) and at least 46 different proteins.

The protein resides in the cytoplasm. In terms of biological role, component of the ribosome, a large ribonucleoprotein complex responsible for the synthesis of proteins in the cell. The small ribosomal subunit (SSU) binds messenger RNAs (mRNAs) and translates the encoded message by selecting cognate aminoacyl-transfer RNA (tRNA) molecules. The large subunit (LSU) contains the ribosomal catalytic site termed the peptidyl transferase center (PTC), which catalyzes the formation of peptide bonds, thereby polymerizing the amino acids delivered by tRNAs into a polypeptide chain. The nascent polypeptides leave the ribosome through a tunnel in the LSU and interact with protein factors that function in enzymatic processing, targeting, and the membrane insertion of nascent chains at the exit of the ribosomal tunnel. The polypeptide is Small ribosomal subunit protein eS25A (rps2502) (Schizosaccharomyces pombe (strain 972 / ATCC 24843) (Fission yeast)).